We begin with the raw amino-acid sequence, 287 residues long: Protease HtpX (287 aa).

2 helical membrane-spanning segments follow: residues 4 to 24 (IFLL…VMSI) and 33 to 53 (GGLL…SLAI). His-139 lines the Zn(2+) pocket. Residue Glu-140 is part of the active site. Residue His-143 participates in Zn(2+) binding. Helical transmembrane passes span 154–174 (LIQG…AGII) and 195–215 (AVVF…VAYF). Glu-220 lines the Zn(2+) pocket.

The protein belongs to the peptidase M48B family. Zn(2+) is required as a cofactor.

The protein localises to the cell inner membrane. The protein is Protease HtpX of Shewanella sp. (strain ANA-3).